The sequence spans 271 residues: MDDFASLPLVIEPADLQARLSAPELILVDLTSAARYAEGHIPGARFVDPKRTQLGQPPAPGLQPPREQLESLFGELGHRPEAVYVVYDDEGGGWAGRFIWLLDVIGQQRYHYLNGGLTAWLAEDRPLSRELPAPAGGPVALSLHDEPTASRDYLLGRLGAADLAIWDARSPQEYRGEKVLAAKGGHIPGAVNFEWTAAMDPSRALRIRTDIAGRLEELGITPDKEIVTHCQTHHRSGLTYLIAKALGYPRVKGYAGSWGEWGNHPDTPVEL.

Rhodanese domains lie at 21–129 and 159–270; these read SAPE…PLSR and GAAD…TPVE. Cys230 (cysteine persulfide intermediate) is an active-site residue. Residue Arg235 participates in substrate binding.

It is found in the cytoplasm. The catalysed reaction is thiosulfate + hydrogen cyanide = thiocyanate + sulfite + 2 H(+). This is Thiosulfate sulfurtransferase (rhdA) from Azotobacter vinelandii.